Consider the following 142-residue polypeptide: Small ribosomal subunit protein bS6 (142 aa).

The interval 103–142 (KAAESREQRAPRGEDRPARVVADDVDDSDDDTDDEDSNDE) is disordered. Positions 105-124 (AESREQRAPRGEDRPARVVA) are enriched in basic and acidic residues. Positions 125-142 (DDVDDSDDDTDDEDSNDE) are enriched in acidic residues.

Belongs to the bacterial ribosomal protein bS6 family.

Functionally, binds together with bS18 to 16S ribosomal RNA. The protein is Small ribosomal subunit protein bS6 of Hahella chejuensis (strain KCTC 2396).